Reading from the N-terminus, the 635-residue chain is Protein MICRORCHIDIA 1 (635 aa).

The tract at residues 491 to 511 (RTVIPDQPPTVNTYNPSPLPS) is disordered. Residues 588–635 (MRCEEYVKKENEVEQTVKSLEKELEEIKSKCAQLALLVDAKKKEMQQV) are a coiled coil.

Belongs to the MORC ATPase protein family. Homodimer and heterodimer with MORC6. Component of an RNA-directed DNA methylation (RdDM) complex that contains at least MORC6, MORC1/CRT1, MORC2, SWI3D and SUVH9. Binds directly to SUVH2 and SUVH9. Interacts with the resistance proteins RCY1, RPM1, SNC1, RPP8, SSI4 and RPS2. The interactions with various resistance proteins are disrupted when these resistance proteins are activated. Interacts with the PAMP recognition receptor FLS2. Mg(2+) is required as a cofactor. Mn(2+) serves as cofactor. As to expression, expressed constitutively.

It is found in the nucleus. The protein localises to the endosome. Its function is as follows. Mediator of defense signaling triggered by distinct classes of R proteins. Required during hypersensitive response (HR) that confers disease resistance to turnip crinkle virus (TCV). Exhibits ATPase activity. Contributes to resistance against Pseudomonas syringae and Hyaloperonospora arabidopsidis, at early stages prior to cytosolic calcium ions Ca(2+) accumulation. Required for pathogen-associated molecular pattern (PAMP)-triggered immunity (PTI), basal resistance, non-host resistance and systemic acquired resistance (SAR). Binds DNA/RNA in a non-specific manner and exhibits endonuclease activity. Probably involved in DNA repair. Required for both RPP8- and SSI4-mediated resistance responses, thus being involved in both TIR- and CC-NB-LRR pathways. Involved in RNA-directed DNA methylation (RdDM) as a component of the RdDM machinery and required for gene silencing. May also be involved in the regulation of chromatin architecture to maintain gene silencing. In Arabidopsis thaliana (Mouse-ear cress), this protein is Protein MICRORCHIDIA 1.